A 179-amino-acid chain; its full sequence is Replication restart protein DnaT (179 aa).

Residues N155–G179 are disordered.

The protein belongs to the DnaT family. In terms of assembly, homooligomerizes. Interacts with PriB. Component of the replication restart primosome. Primosome assembly occurs via a 'hand-off' mechanism. PriA binds to replication forks, subsequently PriB then DnaT bind; DnaT then displaces ssDNA to generate the helicase loading substrate.

Its function is as follows. Involved in the restart of stalled replication forks, which reloads the replicative helicase on sites other than the origin of replication. Can function in multiple replication restart pathways. Displaces ssDNA from a PriB-ssDNA complex. Probably forms a spiral filament on ssDNA. The protein is Replication restart protein DnaT of Escherichia coli O8 (strain IAI1).